The sequence spans 194 residues: Oligoribonuclease (194 aa).

Positions 11-174 (LIWIDLEMTG…SDVRDSIDEL (164 aa)) constitute an Exonuclease domain. Tyrosine 132 is a catalytic residue.

This sequence belongs to the oligoribonuclease family.

It is found in the cytoplasm. 3'-to-5' exoribonuclease specific for small oligoribonucleotides. The chain is Oligoribonuclease from Xanthomonas euvesicatoria pv. vesicatoria (strain 85-10) (Xanthomonas campestris pv. vesicatoria).